The following is a 259-amino-acid chain: Adenosylcobinamide-GDP ribazoletransferase (259 aa).

The next 6 helical transmembrane spans lie at 9 to 29, 43 to 63, 64 to 84, 118 to 138, 143 to 163, and 196 to 216; these read NLFF…WIEV, LVGL…LYWV, SPSV…GGFH, ALAL…LALF, VSLA…SFIF, and VLAL…GLVI.

It belongs to the CobS family. Mg(2+) serves as cofactor.

It is found in the cell inner membrane. The catalysed reaction is alpha-ribazole + adenosylcob(III)inamide-GDP = adenosylcob(III)alamin + GMP + H(+). It catalyses the reaction alpha-ribazole 5'-phosphate + adenosylcob(III)inamide-GDP = adenosylcob(III)alamin 5'-phosphate + GMP + H(+). The protein operates within cofactor biosynthesis; adenosylcobalamin biosynthesis; adenosylcobalamin from cob(II)yrinate a,c-diamide: step 7/7. In terms of biological role, joins adenosylcobinamide-GDP and alpha-ribazole to generate adenosylcobalamin (Ado-cobalamin). Also synthesizes adenosylcobalamin 5'-phosphate from adenosylcobinamide-GDP and alpha-ribazole 5'-phosphate. The protein is Adenosylcobinamide-GDP ribazoletransferase of Shewanella halifaxensis (strain HAW-EB4).